The following is a 167-amino-acid chain: Phosphopantetheine adenylyltransferase (167 aa).

Serine 11 serves as a coordination point for substrate. ATP contacts are provided by residues 11-12 (SF) and histidine 19. Positions 43, 76, and 90 each coordinate substrate. Residues 91–93 (GIR), glutamate 101, and 126–132 (YDALSST) each bind ATP.

It belongs to the bacterial CoaD family. Homohexamer. It depends on Mg(2+) as a cofactor.

It localises to the cytoplasm. It carries out the reaction (R)-4'-phosphopantetheine + ATP + H(+) = 3'-dephospho-CoA + diphosphate. It participates in cofactor biosynthesis; coenzyme A biosynthesis; CoA from (R)-pantothenate: step 4/5. Reversibly transfers an adenylyl group from ATP to 4'-phosphopantetheine, yielding dephospho-CoA (dPCoA) and pyrophosphate. This chain is Phosphopantetheine adenylyltransferase, found in Lacticaseibacillus casei (strain BL23) (Lactobacillus casei).